We begin with the raw amino-acid sequence, 245 residues long: MTSPATLVLIPARMAATRLPGKPLLDIAGLPMVVQVLRRAQAAEIGRVAVATDAPEIAAAVTAHGGEVVMTRADHPSGSDRIFEALQTLDPDRKIETVINLQGDFPTIRPEQIGAVLGPLADPAVDIATLAAEIHTEEEATNPNVVKVIGSPLAADRLRALYFTRATAPWGDGPRYHHIGLYGYRRAALERFVALPPSPLELREKLEQLRALEAGMRIDVGIVDTVPRGVDTPADLETARRVLGG.

The protein belongs to the KdsB family.

Its subcellular location is the cytoplasm. It carries out the reaction 3-deoxy-alpha-D-manno-oct-2-ulosonate + CTP = CMP-3-deoxy-beta-D-manno-octulosonate + diphosphate. Its pathway is nucleotide-sugar biosynthesis; CMP-3-deoxy-D-manno-octulosonate biosynthesis; CMP-3-deoxy-D-manno-octulosonate from 3-deoxy-D-manno-octulosonate and CTP: step 1/1. It participates in bacterial outer membrane biogenesis; lipopolysaccharide biosynthesis. In terms of biological role, activates KDO (a required 8-carbon sugar) for incorporation into bacterial lipopolysaccharide in Gram-negative bacteria. The protein is 3-deoxy-manno-octulosonate cytidylyltransferase of Rhodopseudomonas palustris (strain TIE-1).